The primary structure comprises 143 residues: Transcription antitermination protein NusB (143 aa).

It belongs to the NusB family.

Involved in transcription antitermination. Required for transcription of ribosomal RNA (rRNA) genes. Binds specifically to the boxA antiterminator sequence of the ribosomal RNA (rrn) operons. The sequence is that of Transcription antitermination protein NusB from Clostridium botulinum (strain Kyoto / Type A2).